The sequence spans 546 residues: DDB1- and CUL4-associated factor 11 (546 aa).

A compositionally biased stretch (low complexity) spans 1–19 (MGSRNSSSAGSGSGDPSEG). Positions 1–40 (MGSRNSSSAGSGSGDPSEGLTRRGAGLRRSEEEEEEDEDV) are disordered. Ser75 is modified (phosphoserine). WD repeat units follow at residues 170 to 210 (SYSQ…RKFK), 216 to 258 (DVGW…TALD), 263 to 302 (ERRF…RTLQ), 305 to 345 (SHED…EDDP), 353 to 392 (GHQD…SREG), 435 to 480 (GVLH…KKLT), and 481 to 520 (NHKA…YFQD). Residues 523-546 (PESEECASAPAPVPRSSTPFSSPQ) form a disordered region. Polar residues predominate over residues 537–546 (RSSTPFSSPQ).

In terms of assembly, interacts with DDB1 and CUL4A.

It functions in the pathway protein modification; protein ubiquitination. May function as a substrate receptor for CUL4-DDB1 E3 ubiquitin-protein ligase complex. This is DDB1- and CUL4-associated factor 11 (DCAF11) from Pongo abelii (Sumatran orangutan).